The primary structure comprises 516 residues: H/ACA ribonucleoprotein complex subunit DKC1 (516 aa).

The interval 1–24 is disordered; it reads MADGDGSSVKKRRKKDKRSLPDED. The active-site Nucleophile is the Asp123. The PUA domain maps to 294-369; sequence HKRLVMKDSA…VVAKIKRVIM (76 aa). Positions 422–516 are disordered; that stretch reads KKEAAKVPQA…KQKEVEESSE (95 aa). A compositionally biased stretch (basic and acidic residues) spans 434 to 446; sequence EVERAPKRKRESE. The segment covering 453–464 has biased composition (pro residues); it reads SPPPSPATPPPE. The stretch at 463 to 516 forms a coiled coil; the sequence is PEELSKKEKKKKKKEKKAKEAAESGEEQVEVISESSAKKKKKKKKQKEVEESSE. Residues 469–478 show a composition bias toward basic residues; the sequence is KEKKKKKKEK.

The protein belongs to the pseudouridine synthase TruB family. As to quaternary structure, part of the H/ACA small nucleolar ribonucleoprotein (H/ACA snoRNP) complex, which contains NHP2/NOLA2, GAR1/NOLA1, NOP10/NOLA3, and DKC1/NOLA4, which is presumed to be the catalytic subunit. The complex contains a stable core formed by binding of one or two NOP10-DKC1 heterodimers to NHP2; GAR1 subsequently binds to this core via DKC1. The complex binds a box H/ACA small nucleolar RNA (snoRNA), which may target the specific site of modification within the RNA substrate.

It is found in the nucleus. Its subcellular location is the nucleolus. The protein resides in the cajal body. The enzyme catalyses uridine in 5S rRNA = pseudouridine in 5S rRNA. In terms of biological role, catalytic subunit of H/ACA small nucleolar ribonucleoprotein (H/ACA snoRNP) complex, which catalyzes pseudouridylation of rRNA. This involves the isomerization of uridine such that the ribose is subsequently attached to C5, instead of the normal N1. Each rRNA can contain up to 100 pseudouridine ('psi') residues, which may serve to stabilize the conformation of rRNAs. Required for ribosome biogenesis and telomere maintenance. The sequence is that of H/ACA ribonucleoprotein complex subunit DKC1 (DKC1) from Gallus gallus (Chicken).